A 1500-amino-acid polypeptide reads, in one-letter code: ABC transporter G family member 42 (1500 aa).

Residues 26–56 form a disordered region; it reads VDEAFMPQNSGGGGGSRGRRRSGRGGTADDD. Residues 182–455 form the ABC transporter 1 domain; the sequence is LGLVGVRPGR…FESCGFRCPE (274 aa). An ATP-binding site is contributed by 215 to 222; it reads GPPSSGKT. Residues 533–746 form the ABC transmembrane type-2 1 domain; it reads ELLKASFAKE…GYNALAVNEF (214 aa). Transmembrane regions (helical) follow at residues 551-571, 584-604, 639-659, 670-690, 695-715, 724-744, and 783-803; these read FVYI…STVF, GFVY…NGFA, IPFS…TIGF, LLLV…TAGL, IIAQ…GGFL, WWIW…LAVN, and FWIG…LFTL. Positions 822 to 834 are enriched in basic and acidic residues; the sequence is TAKEAEGNGDARH. The interval 822 to 850 is disordered; it reads TAKEAEGNGDARHTVRNGSTKSNGGNHKE. Positions 837 to 846 are enriched in polar residues; sequence RNGSTKSNGG. Residues 894 to 1151 enclose the ABC transporter 2 domain; that stretch reads MSFDDVNYYV…KMIEYFEAIP (258 aa). 939-946 serves as a coordination point for ATP; it reads GVSGAGKT. In terms of domain architecture, ABC transmembrane type-2 2 spans 1224–1438; it reads GQFRACLWKQ…TVYGLIVTQY (215 aa). The next 7 membrane-spanning stretches (helical) occupy residues 1245–1265, 1277–1297, 1331–1351, 1358–1378, 1388–1408, 1416–1436, and 1472–1492; these read LVRF…FWKI, MVIG…CATV, IPYV…MMSF, FFWF…YGMM, VAAI…GFFI, WWIW…LIVT, and VVAP…AICI.

This sequence belongs to the ABC transporter superfamily. ABCG family. PDR (TC 3.A.1.205) subfamily.

It is found in the membrane. In terms of biological role, may be a general defense protein. The protein is ABC transporter G family member 42 of Oryza sativa subsp. japonica (Rice).